The sequence spans 216 residues: 3-keto-L-gulonate-6-phosphate decarboxylase UlaD (216 aa).

Substrate is bound at residue D11. Residues E33 and D62 each coordinate Mg(2+). R192 is a substrate binding site.

This sequence belongs to the HPS/KGPDC family. KGPDC subfamily. Homodimer. Mg(2+) serves as cofactor.

The catalysed reaction is 3-dehydro-L-gulonate 6-phosphate + H(+) = L-xylulose 5-phosphate + CO2. It participates in cofactor degradation; L-ascorbate degradation; D-xylulose 5-phosphate from L-ascorbate: step 2/4. Catalyzes the decarboxylation of 3-keto-L-gulonate-6-P into L-xylulose-5-P. Is involved in the anaerobic L-ascorbate utilization. The chain is 3-keto-L-gulonate-6-phosphate decarboxylase UlaD from Escherichia coli O139:H28 (strain E24377A / ETEC).